The following is a 128-amino-acid chain: Small ribosomal subunit protein uS11 (128 aa).

The protein belongs to the universal ribosomal protein uS11 family. As to quaternary structure, part of the 30S ribosomal subunit. Interacts with proteins S7 and S18. Binds to IF-3.

Located on the platform of the 30S subunit, it bridges several disparate RNA helices of the 16S rRNA. Forms part of the Shine-Dalgarno cleft in the 70S ribosome. This chain is Small ribosomal subunit protein uS11, found in Porphyromonas gingivalis (strain ATCC BAA-308 / W83).